A 480-amino-acid chain; its full sequence is Proline--tRNA ligase (480 aa).

The protein belongs to the class-II aminoacyl-tRNA synthetase family. ProS type 3 subfamily. Homodimer.

It localises to the cytoplasm. The catalysed reaction is tRNA(Pro) + L-proline + ATP = L-prolyl-tRNA(Pro) + AMP + diphosphate. Catalyzes the attachment of proline to tRNA(Pro) in a two-step reaction: proline is first activated by ATP to form Pro-AMP and then transferred to the acceptor end of tRNA(Pro). This is Proline--tRNA ligase from Pyrococcus abyssi (strain GE5 / Orsay).